The following is a 213-amino-acid chain: Kynurenine formamidase (213 aa).

Trp18 serves as a coordination point for substrate. Zn(2+) contacts are provided by His48, His52, and Asp54. The Proton donor/acceptor role is filled by His58. 2 residues coordinate Zn(2+): His160 and Glu172.

Belongs to the Cyclase 1 superfamily. KynB family. As to quaternary structure, homodimer. Zn(2+) serves as cofactor.

It carries out the reaction N-formyl-L-kynurenine + H2O = L-kynurenine + formate + H(+). It participates in amino-acid degradation; L-tryptophan degradation via kynurenine pathway; L-kynurenine from L-tryptophan: step 2/2. Catalyzes the hydrolysis of N-formyl-L-kynurenine to L-kynurenine, the second step in the kynurenine pathway of tryptophan degradation. This Burkholderia pseudomallei (strain 1106a) protein is Kynurenine formamidase.